The primary structure comprises 291 residues: MKEIAIIGSTASGKTALSLEIASKTNSIILSLDSLCVYKEIDIVSAKPTLEERGEILHFGIDEVYPNVEFDVVCFMELYKKAKEYALKNDKNLIIVGGTGFYLKALIDGLSLGIESKIKLDISVSEAYDLLYSLDEMYMKKIEKNDKYRVEKAYAIYKQTGLTPTLYFEKNPKIPLAKDLKIFEILWEKEDLKKRVASRTNTMIKSGLIDEIIYLEKKYTRAPNCMSSIGIVETFEYLDGKLSKEELEEKISQNTMKLAKRQNTFNKGQFLNKTSNIIDNLNSDILKYFSI.

8-15 lines the ATP pocket; it reads GSTASGKT. 10–15 contributes to the substrate binding site; it reads TASGKT. The interaction with substrate tRNA stretch occupies residues 33 to 36; it reads DSLC.

Belongs to the IPP transferase family. As to quaternary structure, monomer. Mg(2+) is required as a cofactor.

The catalysed reaction is adenosine(37) in tRNA + dimethylallyl diphosphate = N(6)-dimethylallyladenosine(37) in tRNA + diphosphate. Its function is as follows. Catalyzes the transfer of a dimethylallyl group onto the adenine at position 37 in tRNAs that read codons beginning with uridine, leading to the formation of N6-(dimethylallyl)adenosine (i(6)A). In Aliarcobacter butzleri (strain RM4018) (Arcobacter butzleri), this protein is tRNA dimethylallyltransferase.